We begin with the raw amino-acid sequence, 152 residues long: Ribosomal RNA large subunit methyltransferase H (152 aa).

Residues Leu69, Gly96, and 118–123 each bind S-adenosyl-L-methionine; that span reads FGKLTF.

This sequence belongs to the RNA methyltransferase RlmH family. In terms of assembly, homodimer.

The protein resides in the cytoplasm. It carries out the reaction pseudouridine(1915) in 23S rRNA + S-adenosyl-L-methionine = N(3)-methylpseudouridine(1915) in 23S rRNA + S-adenosyl-L-homocysteine + H(+). Specifically methylates the pseudouridine at position 1915 (m3Psi1915) in 23S rRNA. The protein is Ribosomal RNA large subunit methyltransferase H of Mesomycoplasma hyopneumoniae (strain 232) (Mycoplasma hyopneumoniae).